Here is a 542-residue protein sequence, read N- to C-terminus: Calcium/calmodulin-dependent protein kinase type II subunit beta (542 aa).

Residues 14-272 (YQLYEDIGKG…AHEALKHPWV (259 aa)) form the Protein kinase domain. Y17 is subject to Phosphotyrosine. ATP contacts are provided by residues 20–28 (IGKGAFSVV) and K43. The active-site Proton acceptor is D136. An autoinhibitory domain region spans residues 283 to 292 (HRQETVECLK). A Phosphothreonine; by autocatalysis modification is found at T287. Residues 291-301 (LKKFNARRKLK) form a calmodulin-binding region. T306 and T307 each carry phosphothreonine; by autocatalysis. Residues 349–376 (ADGVKPQTNSTKNSSAITSPKGSLPPAA) form a disordered region. Positions 354 to 369 (PQTNSTKNSSAITSPK) are enriched in polar residues. A phosphoserine mark is found at S367, S371, S394, and S397. A phosphothreonine mark is found at T400 and T401.

The protein belongs to the protein kinase superfamily. CAMK Ser/Thr protein kinase family. CaMK subfamily. CAMK2 is composed of 4 different chains: alpha (CAMK2A), beta (CAMK2B), gamma (CAMK2G), and delta (CAMK2D). The different isoforms assemble into homo- or heteromultimeric holoenzymes composed of 12 subunits with two hexameric rings stacked one on top of the other. Interacts with SYNGAP1, CAMK2N2 and MPDZ. Interacts with FOXO3. Interacts (when in a kinase inactive state not associated with calmodulin) with ARC; leading to target ARC to inactive synapses. Interacts with CAMK2N1; this interaction requires CAMK2B activation by Ca(2+). In terms of processing, autophosphorylation of Thr-287 following activation by Ca(2+)/calmodulin. Phosphorylation of Thr-287 locks the kinase into an activated state.

The protein resides in the cytoplasm. The protein localises to the cytoskeleton. It localises to the microtubule organizing center. Its subcellular location is the centrosome. It is found in the sarcoplasmic reticulum membrane. The protein resides in the synapse. The enzyme catalyses L-seryl-[protein] + ATP = O-phospho-L-seryl-[protein] + ADP + H(+). The catalysed reaction is L-threonyl-[protein] + ATP = O-phospho-L-threonyl-[protein] + ADP + H(+). Its activity is regulated as follows. Activated by Ca(2+)/calmodulin. Binding of calmodulin results in conformational change that relieves intrasteric autoinhibition and allows autophosphorylation of Thr-287 which turns the kinase in a constitutively active form and confers to the kinase a Ca(2+)-independent activity. Calcium/calmodulin-dependent protein kinase that functions autonomously after Ca(2+)/calmodulin-binding and autophosphorylation, and is involved in dendritic spine and synapse formation, neuronal plasticity and regulation of sarcoplasmic reticulum Ca(2+) transport in skeletal muscle. In neurons, plays an essential structural role in the reorganization of the actin cytoskeleton during plasticity by binding and bundling actin filaments in a kinase-independent manner. This structural function is required for correct targeting of CaMK2A, which acts downstream of NMDAR to promote dendritic spine and synapse formation and maintain synaptic plasticity which enables long-term potentiation (LTP) and hippocampus-dependent learning. In developing hippocampal neurons, promotes arborization of the dendritic tree and in mature neurons, promotes dendritic remodeling. Also regulates the migration of developing neurons. Participates in the modulation of skeletal muscle function in response to exercise. In slow-twitch muscles, is involved in regulation of sarcoplasmic reticulum (SR) Ca(2+) transport and in fast-twitch muscle participates in the control of Ca(2+) release from the SR through phosphorylation of triadin, a ryanodine receptor-coupling factor, and phospholamban (PLN/PLB), an endogenous inhibitor of SERCA2A/ATP2A2. In response to interferon-gamma (IFN-gamma) stimulation, catalyzes phosphorylation of STAT1, stimulating the JAK-STAT signaling pathway. Phosphorylates reticulophagy regulator RETREG1 at 'Thr-134' under endoplasmic reticulum stress conditions which enhances RETREG1 oligomerization and its membrane scission and reticulophagy activity. The sequence is that of Calcium/calmodulin-dependent protein kinase type II subunit beta (Camk2b) from Mus musculus (Mouse).